A 505-amino-acid polypeptide reads, in one-letter code: Probable cytochrome P450 28c1 (505 aa).

Cys-444 serves as a coordination point for heme.

Belongs to the cytochrome P450 family. Heme serves as cofactor.

It is found in the endoplasmic reticulum membrane. It localises to the microsome membrane. May be involved in the metabolism of insect hormones and in the breakdown of synthetic insecticides. In Drosophila melanogaster (Fruit fly), this protein is Probable cytochrome P450 28c1 (Cyp28c1).